A 437-amino-acid polypeptide reads, in one-letter code: Enolase (437 aa).

Gln-162 is a binding site for (2R)-2-phosphoglycerate. Catalysis depends on Glu-204, which acts as the Proton donor. Residues Asp-251, Glu-297, and Asp-324 each contribute to the Mg(2+) site. Positions 349, 378, 379, and 400 each coordinate (2R)-2-phosphoglycerate. Lys-349 acts as the Proton acceptor in catalysis.

The protein belongs to the enolase family. It depends on Mg(2+) as a cofactor.

Its subcellular location is the cytoplasm. The protein resides in the secreted. It is found in the cell surface. It catalyses the reaction (2R)-2-phosphoglycerate = phosphoenolpyruvate + H2O. Its pathway is carbohydrate degradation; glycolysis; pyruvate from D-glyceraldehyde 3-phosphate: step 4/5. In terms of biological role, catalyzes the reversible conversion of 2-phosphoglycerate (2-PG) into phosphoenolpyruvate (PEP). It is essential for the degradation of carbohydrates via glycolysis. The sequence is that of Enolase from Chlorobium phaeovibrioides (strain DSM 265 / 1930) (Prosthecochloris vibrioformis (strain DSM 265)).